We begin with the raw amino-acid sequence, 82 residues long: UPF0291 protein LVIS_1359 (82 aa).

It belongs to the UPF0291 family.

Its subcellular location is the cytoplasm. This chain is UPF0291 protein LVIS_1359, found in Levilactobacillus brevis (strain ATCC 367 / BCRC 12310 / CIP 105137 / JCM 1170 / LMG 11437 / NCIMB 947 / NCTC 947) (Lactobacillus brevis).